The chain runs to 365 residues: Histidinol-phosphate aminotransferase (365 aa).

The residue at position 221 (K221) is an N6-(pyridoxal phosphate)lysine.

This sequence belongs to the class-II pyridoxal-phosphate-dependent aminotransferase family. Histidinol-phosphate aminotransferase subfamily. As to quaternary structure, homodimer. Requires pyridoxal 5'-phosphate as cofactor.

The enzyme catalyses L-histidinol phosphate + 2-oxoglutarate = 3-(imidazol-4-yl)-2-oxopropyl phosphate + L-glutamate. The protein operates within amino-acid biosynthesis; L-histidine biosynthesis; L-histidine from 5-phospho-alpha-D-ribose 1-diphosphate: step 7/9. This Rhodopseudomonas palustris (strain HaA2) protein is Histidinol-phosphate aminotransferase.